Reading from the N-terminus, the 382-residue chain is MIOREX complex component 5 (382 aa).

A mitochondrion-targeting transit peptide spans 1-12 (MRRTFSQLATRL).

Associates with the mitochondrial ribosome.

It is found in the mitochondrion. Its function is as follows. Component of MIOREX complexes, large expressome-like assemblies of ribosomes with factors involved in all the steps of post-transcriptional gene expression. This Saccharomyces cerevisiae (strain ATCC 204508 / S288c) (Baker's yeast) protein is MIOREX complex component 5.